Here is a 247-residue protein sequence, read N- to C-terminus: 5'-nucleotidase SurE (247 aa).

A divalent metal cation is bound by residues Asp-8, Asp-9, Ser-39, and Asn-95.

This sequence belongs to the SurE nucleotidase family. Requires a divalent metal cation as cofactor.

It localises to the cytoplasm. It carries out the reaction a ribonucleoside 5'-phosphate + H2O = a ribonucleoside + phosphate. In terms of biological role, nucleotidase that shows phosphatase activity on nucleoside 5'-monophosphates. The chain is 5'-nucleotidase SurE from Thermotoga petrophila (strain ATCC BAA-488 / DSM 13995 / JCM 10881 / RKU-1).